A 518-amino-acid polypeptide reads, in one-letter code: UNC5C-like protein (518 aa).

At 1 to 10 (MSPQESSVQP) the chain is on the extracellular side. The helical; Signal-anchor for type III membrane protein transmembrane segment at 11–31 (SQFLLLVGIPVASALLLAQCL) threads the bilayer. At 32–518 (RWHCCQWLPG…NHGLELDEKL (487 aa)) the chain is on the cytoplasmic side. The ZU5 domain maps to 102 to 237 (VFSAREVDHR…FSLYTCVLEA (136 aa)). The segment at 186–400 (QQPSQACAYS…ETWAVPPPVS (215 aa)) is interaction with RELA and NFKB1. Residues 208-235 (PLGQPGTHISRDECRILLSHFSLYTCVL) form a peptidase S68 region. Catalysis depends on residues His227 and Ser229. In terms of domain architecture, Death spans 415-494 (QLQMLLEPNS…SAIQNYLNRS (80 aa)).

It belongs to the unc-5 family. As to quaternary structure, interacts with p65/RELA and NFKB1.

The protein localises to the membrane. Its subcellular location is the cytoplasm. Its function is as follows. Inhibits NF-kappa-B-dependent transcription by impairing NF-kappa-B binding to its targets. The chain is UNC5C-like protein (Unc5cl) from Mus musculus (Mouse).